A 697-amino-acid chain; its full sequence is Glycine--tRNA ligase beta subunit (697 aa).

The protein belongs to the class-II aminoacyl-tRNA synthetase family. As to quaternary structure, tetramer of two alpha and two beta subunits.

The protein localises to the cytoplasm. It catalyses the reaction tRNA(Gly) + glycine + ATP = glycyl-tRNA(Gly) + AMP + diphosphate. The sequence is that of Glycine--tRNA ligase beta subunit from Cereibacter sphaeroides (strain ATCC 17029 / ATH 2.4.9) (Rhodobacter sphaeroides).